We begin with the raw amino-acid sequence, 373 residues long: Carbamoyl phosphate synthase small chain (373 aa).

Residues 1–179 are CPSase; the sequence is MSGKAQLVLE…AYIVEPEGPP (179 aa). L-glutamine is bound by residues Ser47, Gly230, and Gly232. Positions 182–373 constitute a Glutamine amidotransferase type-1 domain; it reads TVAALDLGIK…QFIELMEGDR (192 aa). Cys258 (nucleophile) is an active-site residue. Phe259, Gln262, Asn300, Gly302, and Phe303 together coordinate L-glutamine. Residues His348 and Glu350 contribute to the active site.

It belongs to the CarA family. Composed of two chains; the small (or glutamine) chain promotes the hydrolysis of glutamine to ammonia, which is used by the large (or ammonia) chain to synthesize carbamoyl phosphate. Tetramer of heterodimers (alpha,beta)4.

The catalysed reaction is hydrogencarbonate + L-glutamine + 2 ATP + H2O = carbamoyl phosphate + L-glutamate + 2 ADP + phosphate + 2 H(+). It carries out the reaction L-glutamine + H2O = L-glutamate + NH4(+). It functions in the pathway amino-acid biosynthesis; L-arginine biosynthesis; carbamoyl phosphate from bicarbonate: step 1/1. The protein operates within pyrimidine metabolism; UMP biosynthesis via de novo pathway; (S)-dihydroorotate from bicarbonate: step 1/3. Small subunit of the glutamine-dependent carbamoyl phosphate synthetase (CPSase). CPSase catalyzes the formation of carbamoyl phosphate from the ammonia moiety of glutamine, carbonate, and phosphate donated by ATP, constituting the first step of 2 biosynthetic pathways, one leading to arginine and/or urea and the other to pyrimidine nucleotides. The small subunit (glutamine amidotransferase) binds and cleaves glutamine to supply the large subunit with the substrate ammonia. The sequence is that of Carbamoyl phosphate synthase small chain from Mycolicibacterium paratuberculosis (strain ATCC BAA-968 / K-10) (Mycobacterium paratuberculosis).